Reading from the N-terminus, the 851-residue chain is Protein FAM13B (851 aa).

The region spanning 23 to 212 is the Rho-GAP domain; that stretch reads IPLDELQQGG…GLLENYYEFF (190 aa). Residues 556-565 are compositionally biased toward basic and acidic residues; that stretch reads IKDAKHKNSD. The disordered stretch occupies residues 556-611; that stretch reads IKDAKHKNSDGEFAPQTRPRSNTLPKSFGSSLDHEDGESEGEPRVIQKEKTPSKEA. Over residues 573 to 585 the composition is skewed to polar residues; that stretch reads RPRSNTLPKSFGS. Over residues 596 to 611 the composition is skewed to basic and acidic residues; the sequence is GEPRVIQKEKTPSKEA.

The protein belongs to the FAM13 family.

This chain is Protein FAM13B (Fam13b), found in Mus musculus (Mouse).